The primary structure comprises 872 residues: DNA mismatch repair protein MutS (872 aa).

An ATP-binding site is contributed by 602–609 (GPNMSGKS).

Belongs to the DNA mismatch repair MutS family.

Its function is as follows. This protein is involved in the repair of mismatches in DNA. It is possible that it carries out the mismatch recognition step. This protein has a weak ATPase activity. This chain is DNA mismatch repair protein MutS, found in Staphylococcus aureus (strain MRSA252).